Here is a 332-residue protein sequence, read N- to C-terminus: Biotin synthase (332 aa).

In terms of domain architecture, Radical SAM core spans 47–273 (YYGNKVKLNM…MNPTKEIRIA (227 aa)). Cys65, Cys69, and Cys72 together coordinate [4Fe-4S] cluster. Positions 109, 141, 201, and 271 each coordinate [2Fe-2S] cluster.

It belongs to the radical SAM superfamily. Biotin synthase family. As to quaternary structure, homodimer. Requires [4Fe-4S] cluster as cofactor. [2Fe-2S] cluster is required as a cofactor.

The enzyme catalyses (4R,5S)-dethiobiotin + (sulfur carrier)-SH + 2 reduced [2Fe-2S]-[ferredoxin] + 2 S-adenosyl-L-methionine = (sulfur carrier)-H + biotin + 2 5'-deoxyadenosine + 2 L-methionine + 2 oxidized [2Fe-2S]-[ferredoxin]. It participates in cofactor biosynthesis; biotin biosynthesis; biotin from 7,8-diaminononanoate: step 2/2. Functionally, catalyzes the conversion of dethiobiotin (DTB) to biotin by the insertion of a sulfur atom into dethiobiotin via a radical-based mechanism. The sequence is that of Biotin synthase from Geobacillus thermodenitrificans (strain NG80-2).